The sequence spans 156 residues: Ribosomal RNA large subunit methyltransferase H (156 aa).

S-adenosyl-L-methionine contacts are provided by residues Leu73, Gly104, and 123 to 128; that span reads LSALTL.

Belongs to the RNA methyltransferase RlmH family. In terms of assembly, homodimer.

The protein localises to the cytoplasm. The catalysed reaction is pseudouridine(1915) in 23S rRNA + S-adenosyl-L-methionine = N(3)-methylpseudouridine(1915) in 23S rRNA + S-adenosyl-L-homocysteine + H(+). Specifically methylates the pseudouridine at position 1915 (m3Psi1915) in 23S rRNA. The sequence is that of Ribosomal RNA large subunit methyltransferase H from Shewanella sediminis (strain HAW-EB3).